A 154-amino-acid chain; its full sequence is Superoxide dismutase [Cu-Zn] (154 aa).

Cu cation contacts are provided by His47, His49, and His64. The cysteines at positions 58 and 147 are disulfide-linked. Positions 64, 72, 81, and 84 each coordinate Zn(2+). Position 121 (His121) interacts with Cu cation. The span at 125–137 shows a compositional bias: basic and acidic residues; the sequence is DDLGRSEHPESKK. The tract at residues 125–144 is disordered; that stretch reads DDLGRSEHPESKKTGNAGAR. Arg144 is a binding site for substrate.

This sequence belongs to the Cu-Zn superoxide dismutase family. In terms of assembly, homodimer. Cu cation is required as a cofactor. Zn(2+) serves as cofactor.

It is found in the cytoplasm. The catalysed reaction is 2 superoxide + 2 H(+) = H2O2 + O2. Its function is as follows. Destroys radicals which are normally produced within the cells and which are toxic to biological systems. The polypeptide is Superoxide dismutase [Cu-Zn] (sodC) (Aspergillus oryzae (strain ATCC 42149 / RIB 40) (Yellow koji mold)).